We begin with the raw amino-acid sequence, 315 residues long: Ribosomal protein L11 methyltransferase (315 aa).

Residues Thr162, Gly183, Asp205, and Asn248 each contribute to the S-adenosyl-L-methionine site.

It belongs to the methyltransferase superfamily. PrmA family.

The protein resides in the cytoplasm. It catalyses the reaction L-lysyl-[protein] + 3 S-adenosyl-L-methionine = N(6),N(6),N(6)-trimethyl-L-lysyl-[protein] + 3 S-adenosyl-L-homocysteine + 3 H(+). Functionally, methylates ribosomal protein L11. The sequence is that of Ribosomal protein L11 methyltransferase from Enterococcus faecalis (strain ATCC 700802 / V583).